The primary structure comprises 347 residues: Tryptophan--tRNA ligase (347 aa).

Residues 10 to 12 and 18 to 19 contribute to the ATP site; these read QAS and GN. A 'HIGH' region motif is present at residues 11–19; the sequence is ASGRQHLGN. Asp-140 serves as a coordination point for L-tryptophan. ATP-binding positions include 152–154, Ile-191, and 200–204; these read GND and KMSKS. A 'KMSKS' region motif is present at residues 200 to 204; that stretch reads KMSKS.

Belongs to the class-I aminoacyl-tRNA synthetase family. In terms of assembly, homodimer.

It is found in the cytoplasm. It catalyses the reaction tRNA(Trp) + L-tryptophan + ATP = L-tryptophyl-tRNA(Trp) + AMP + diphosphate + H(+). Its function is as follows. Catalyzes the attachment of tryptophan to tRNA(Trp). The chain is Tryptophan--tRNA ligase from Mycoplasma genitalium (strain ATCC 33530 / DSM 19775 / NCTC 10195 / G37) (Mycoplasmoides genitalium).